We begin with the raw amino-acid sequence, 2025 residues long: E3 ubiquitin-protein ligase TRIP12 (2025 aa).

The segment covering Met-1–Gly-10 has biased composition (polar residues). The segment at Met-1–Glu-404 is disordered. N-acetylserine is present on Ser-2. Position 12 is a phosphoserine (Ser-12). The segment covering Arg-18–Asp-27 has biased composition (polar residues). The span at Asp-48–Arg-70 shows a compositional bias: basic and acidic residues. Phosphoserine occurs at positions 77, 85, and 100. 3 stretches are compositionally biased toward polar residues: residues Pro-78–Ser-88, Glu-99–Pro-108, and Glu-119–Lys-132. 2 stretches are compositionally biased toward low complexity: residues Ser-154–Thr-166 and Pro-175–Val-216. Position 181 is an N6-acetyllysine (Lys-181). Residues Pro-280 to Pro-290 show a composition bias toward polar residues. Residues Ser-310 and Ser-312 each carry the phosphoserine modification. Over residues Gln-326 to Arg-338 the composition is skewed to polar residues. Residues Gly-346 to Asp-358 show a composition bias toward basic and acidic residues. The span at Asn-362–Ala-371 shows a compositional bias: polar residues. The segment covering Gly-379–Glu-397 has biased composition (low complexity). In terms of domain architecture, WWE spans Met-755–Lys-869. Residues Glu-970–Ser-1077 are disordered. Ser-975 is modified (phosphoserine). Positions Gly-983–Ala-1006 are enriched in low complexity. A phosphoserine mark is found at Ser-1024 and Ser-1030. The span at Lys-1034 to Lys-1047 shows a compositional bias: basic residues. Ser-1049 bears the Phosphoserine mark. Basic and acidic residues predominate over residues Pro-1050–Asn-1059. Low complexity predominate over residues Lys-1062 to Ser-1073. 5 positions are modified to phosphoserine: Ser-1063, Ser-1350, Ser-1355, Ser-1362, and Ser-1409. Thr-1410 carries the phosphothreonine modification. 2 disordered regions span residues Ser-1440–Lys-1466 and Thr-1601–Asp-1620. An N6-acetyllysine modification is found at Lys-1458. Residue Ser-1460 is modified to Phosphoserine. Residues Glu-1529–Pro-1603 form a K-box region. One can recognise an HECT domain in the interval Pro-1918–Ser-2025. The Glycyl thioester intermediate role is filled by Cys-1992.

Belongs to the UPL family. K-HECT subfamily. In terms of assembly, interacts with MYC; leading to disrupt interaction with isoform p19ARF/ARF of CDKN2A. Interacts with TRADD; leading to disrupt interaction with isoform p19ARF/ARF of CDKN2A. Interacts with SMARCC1; leading to disrupt interaction with SMARCE1.

It localises to the nucleus. The protein localises to the nucleoplasm. It catalyses the reaction S-ubiquitinyl-[E2 ubiquitin-conjugating enzyme]-L-cysteine + [acceptor protein]-L-lysine = [E2 ubiquitin-conjugating enzyme]-L-cysteine + N(6)-ubiquitinyl-[acceptor protein]-L-lysine.. It functions in the pathway protein modification; protein ubiquitination. E3 ubiquitin-protein ligase involved in ubiquitin fusion degradation (UFD) pathway and regulation of DNA repair. Part of the ubiquitin fusion degradation (UFD) pathway, a process that mediates ubiquitination of protein at their N-terminus, regardless of the presence of lysine residues in target proteins. Acts as a key regulator of DNA damage response by acting as a suppressor of RNF168, an E3 ubiquitin-protein ligase that promotes accumulation of 'Lys-63'-linked histone H2A and H2AX at DNA damage sites, thereby acting as a guard against excessive spreading of ubiquitinated chromatin at damaged chromosomes. In normal cells, mediates ubiquitination and degradation of isoform p19ARF/ARF of CDKN2A, a lysine-less tumor suppressor required for p53/TP53 activation under oncogenic stress. In cancer cells, however, isoform p19ARF/ARF and TRIP12 are located in different cell compartments, preventing isoform p19ARF/ARF ubiquitination and degradation. Does not mediate ubiquitination of isoform p16-INK4a of CDKN2A. Also catalyzes ubiquitination of NAE1 and SMARCE1, leading to their degradation. Ubiquitination and degradation of target proteins is regulated by interaction with proteins such as MYC, TRADD or SMARCC1, which disrupt the interaction between TRIP12 and target proteins. Mediates ubiquitination of ASXL1: following binding to N(6)-methyladenosine methylated DNA, ASXL1 is ubiquitinated by TRIP12, leading to its degradation and subsequent inactivation of the PR-DUB complex. The protein is E3 ubiquitin-protein ligase TRIP12 (Trip12) of Rattus norvegicus (Rat).